Here is a 1312-residue protein sequence, read N- to C-terminus: DNA repair protein RAD50 (1312 aa).

10 residues coordinate ATP: arginine 13, asparagine 38, glycine 39, glycine 41, lysine 42, threonine 43, threonine 44, valine 67, aspartate 69, and glutamine 159. Threonine 43 contacts Mg(2+). Glutamine 159 lines the Mg(2+) pocket. Coiled-coil stretches lie at residues 228–359, 401–598, and 635–673; these read TSKE…QADR, RERQ…AKLN, and SQDFESDLDRLKEEIEKSSKQRAMLAGATAVYSQFITQL. The residue at position 635 (serine 635) is a Phosphoserine; by ATM. The region spanning 635 to 734 is the Zinc-hook domain; the sequence is SQDFESDLDR…RRDEMLGLVP (100 aa). Zn(2+) contacts are provided by cysteine 681 and cysteine 684. The residue at position 690 (threonine 690) is a Phosphothreonine. Coiled-coil stretches lie at residues 706-734 and 789-1079; these read RLAPDKLKSTESELKKKEKRRDEMLGLVP and LTDV…GRQK. Lysine 959 carries the N6-acetyllysine modification.

The protein belongs to the SMC family. RAD50 subfamily. Component of the MRN complex composed of two heterodimers RAD50 and MRE11 associated with a single NBN. The MRN complexes dimerize on DNA to form joined MRN-MRN oligomers required for DNA double-strand break repair. As part of the MRN complex, interacts with MCM8 and MCM9; the interaction recruits the complex to DNA repair sites. Component of the BASC complex, at least composed of BRCA1, MSH2, MSH6, MLH1, ATM, BLM, RAD50, MRE11 and NBN. Found in a complex with TERF2. Interacts with RINT1. Interacts with BRCA1 via its N-terminal domain. Interacts with DCLRE1C/Artemis. Interacts with MRNIP. Interacts with CYREN (via XLF motif). Interacts with C1QBP and MRE11; interaction takes place in absence of DNA damage to form the MRC (MRE11-RAD50-C1QBP) complex that inhibits the activity of MRE11. As to quaternary structure, (Microbial infection) Interacts with herpes simplex virus 1 protein UL12. Requires Zn(2+) as cofactor. Phosphorylation at Ser-635 by ATM in response to DNA damage is required for double-strand break (DSB) repair. In terms of tissue distribution, expressed at very low level in most tissues, except in testis where it is expressed at higher level. Expressed in fibroblasts.

The protein localises to the nucleus. It localises to the chromosome. Its subcellular location is the telomere. The enzyme catalyses ATP + H2O = ADP + phosphate + H(+). Functionally, component of the MRN complex, which plays a central role in double-strand break (DSB) repair, DNA recombination, maintenance of telomere integrity and meiosis. The MRN complex is involved in the repair of DNA double-strand breaks (DSBs) via homologous recombination (HR), an error-free mechanism which primarily occurs during S and G2 phases. The complex (1) mediates the end resection of damaged DNA, which generates proper single-stranded DNA, a key initial steps in HR, and is (2) required for the recruitment of other repair factors and efficient activation of ATM and ATR upon DNA damage. The MRN complex possesses single-strand endonuclease activity and double-strand-specific 3'-5' exonuclease activity, which are provided by MRE11, to initiate end resection, which is required for single-strand invasion and recombination. Within the complex, RAD50 is both required to bind DNA ends and hold them in close proximity and regulate the activity of MRE11. RAD50 provides an ATP-dependent control of MRE11 by positioning DNA ends into the MRE11 active site: ATP-binding induces a large structural change from an open form with accessible MRE11 nuclease sites into a closed form. The MRN complex is also required for DNA damage signaling via activation of the ATM and ATR kinases: the nuclease activity of MRE11 is not required to activate ATM and ATR. The MRN complex is also required for the processing of R-loops. In telomeres the MRN complex may modulate t-loop formation. This Homo sapiens (Human) protein is DNA repair protein RAD50.